The chain runs to 325 residues: Phosphate acyltransferase (325 aa).

Belongs to the PlsX family. As to quaternary structure, homodimer. Probably interacts with PlsY.

It is found in the cytoplasm. It catalyses the reaction a fatty acyl-[ACP] + phosphate = an acyl phosphate + holo-[ACP]. It functions in the pathway lipid metabolism; phospholipid metabolism. Catalyzes the reversible formation of acyl-phosphate (acyl-PO(4)) from acyl-[acyl-carrier-protein] (acyl-ACP). This enzyme utilizes acyl-ACP as fatty acyl donor, but not acyl-CoA. In Staphylococcus epidermidis (strain ATCC 35984 / DSM 28319 / BCRC 17069 / CCUG 31568 / BM 3577 / RP62A), this protein is Phosphate acyltransferase.